Here is a 1214-residue protein sequence, read N- to C-terminus: Receptor-type guanylate cyclase gcy-19 (1214 aa).

The N-terminal stretch at 1–18 (MEHLIFLLIFGGYSPSIA) is a signal peptide. The Extracellular segment spans residues 19 to 517 (QITSSTTTTT…PQTFVDQYGA (499 aa)). N-linked (GlcNAc...) asparagine glycans are attached at residues N85, N363, N441, and N464. The helical transmembrane segment at 518-538 (LVFSIGGVLALAMLFLITCFF) threads the bilayer. Topologically, residues 539-1214 (YVLRQRKLER…FRRQETLALM (676 aa)) are cytoplasmic. A Protein kinase domain is found at 572–859 (RMSKRSIQSG…KGNLMDHVFN (288 aa)). The Guanylate cyclase domain occupies 917-1047 (TVFFSDVVKF…DTVNTASRME (131 aa)). The tract at residues 1116–1197 (NSSNMAYNPE…EKAREIHNEE (82 aa)) is disordered. The segment covering 1133 to 1142 (DDEDVDDESS) has biased composition (acidic residues). Over residues 1186-1197 (LEEKAREIHNEE) the composition is skewed to basic and acidic residues.

It belongs to the adenylyl cyclase class-4/guanylyl cyclase family. In terms of tissue distribution, expressed asymmetrically in ASE right (ASER) sensory neuron.

Its subcellular location is the cell membrane. The enzyme catalyses GTP = 3',5'-cyclic GMP + diphosphate. Guanylate cyclase involved in the production of the second messenger cGMP. The protein is Receptor-type guanylate cyclase gcy-19 of Caenorhabditis briggsae.